The primary structure comprises 168 residues: Phosphopantetheine adenylyltransferase (168 aa).

Thr-14 contacts substrate. Residues Thr-14–Phe-15 and His-22 each bind ATP. Residues Lys-46, Leu-78, and Arg-92 each contribute to the substrate site. ATP-binding positions include Gly-93–Arg-95, Glu-103, and Tyr-128–Ser-134.

It belongs to the bacterial CoaD family. In terms of assembly, homohexamer. Requires Mg(2+) as cofactor.

The protein localises to the cytoplasm. It carries out the reaction (R)-4'-phosphopantetheine + ATP + H(+) = 3'-dephospho-CoA + diphosphate. It participates in cofactor biosynthesis; coenzyme A biosynthesis; CoA from (R)-pantothenate: step 4/5. In terms of biological role, reversibly transfers an adenylyl group from ATP to 4'-phosphopantetheine, yielding dephospho-CoA (dPCoA) and pyrophosphate. This chain is Phosphopantetheine adenylyltransferase, found in Xanthomonas campestris pv. campestris (strain B100).